The following is a 326-amino-acid chain: Cytosolic sulfotransferase 7 (326 aa).

K72–W77 contacts 3'-phosphoadenylyl sulfate. The active-site Proton acceptor is H138. Residues R160, S168, Y226, and R292–G294 each bind 3'-phosphoadenylyl sulfate.

This sequence belongs to the sulfotransferase 1 family.

The protein resides in the cytoplasm. In terms of biological role, sulfotransferase that utilizes 3'-phospho-5'-adenylyl sulfate (PAPS) as sulfonate donor. In Arabidopsis thaliana (Mouse-ear cress), this protein is Cytosolic sulfotransferase 7 (SOT7).